A 274-amino-acid chain; its full sequence is MKQYHDLLKHVLEQGAQKGDRTGTGTKSVFGYQMRFDLSEGFPMVTTKKLHLKSIIYELLWFLKGDTNIEYLKENGVRIWNEWADDNGDLGPVYGHQWRNWNGEEIDQIKEIVHSLKHNPNSRRMLVSAWNPSVLPDTSVSFSENVANGKAALPPCHAFFQFYVADGKLSCQLYQRSADIFLGVPFNIASYALLTMMMAQVCGYEAGDFIHTFGDAHIYSNHMEQVELQLSREPRQLPIMKINPEVKDIFDFKFEDFTLEDYDPHPGIKAKVAI.

Arg-21 provides a ligand contact to dUMP. His-51 serves as a coordination point for (6R)-5,10-methylene-5,6,7,8-tetrahydrofolate. 123–124 contacts dUMP; sequence RR. The active-site Nucleophile is Cys-156. DUMP contacts are provided by residues 176–179, Asn-187, and 217–219; these read RSAD and HIY. Asp-179 lines the (6R)-5,10-methylene-5,6,7,8-tetrahydrofolate pocket. Position 273 (Ala-273) interacts with (6R)-5,10-methylene-5,6,7,8-tetrahydrofolate.

The protein belongs to the thymidylate synthase family. Bacterial-type ThyA subfamily. Homodimer.

It is found in the cytoplasm. It carries out the reaction dUMP + (6R)-5,10-methylene-5,6,7,8-tetrahydrofolate = 7,8-dihydrofolate + dTMP. Its pathway is pyrimidine metabolism; dTTP biosynthesis. Functionally, catalyzes the reductive methylation of 2'-deoxyuridine-5'-monophosphate (dUMP) to 2'-deoxythymidine-5'-monophosphate (dTMP) while utilizing 5,10-methylenetetrahydrofolate (mTHF) as the methyl donor and reductant in the reaction, yielding dihydrofolate (DHF) as a by-product. This enzymatic reaction provides an intracellular de novo source of dTMP, an essential precursor for DNA biosynthesis. In Christiangramia forsetii (strain DSM 17595 / CGMCC 1.15422 / KT0803) (Gramella forsetii), this protein is Thymidylate synthase.